A 213-amino-acid chain; its full sequence is Leucyl/phenylalanyl-tRNA--protein transferase (213 aa).

It belongs to the L/F-transferase family.

It localises to the cytoplasm. It catalyses the reaction N-terminal L-lysyl-[protein] + L-leucyl-tRNA(Leu) = N-terminal L-leucyl-L-lysyl-[protein] + tRNA(Leu) + H(+). It carries out the reaction N-terminal L-arginyl-[protein] + L-leucyl-tRNA(Leu) = N-terminal L-leucyl-L-arginyl-[protein] + tRNA(Leu) + H(+). The catalysed reaction is L-phenylalanyl-tRNA(Phe) + an N-terminal L-alpha-aminoacyl-[protein] = an N-terminal L-phenylalanyl-L-alpha-aminoacyl-[protein] + tRNA(Phe). Functions in the N-end rule pathway of protein degradation where it conjugates Leu, Phe and, less efficiently, Met from aminoacyl-tRNAs to the N-termini of proteins containing an N-terminal arginine or lysine. In Campylobacter lari (strain RM2100 / D67 / ATCC BAA-1060), this protein is Leucyl/phenylalanyl-tRNA--protein transferase.